Reading from the N-terminus, the 388-residue chain is Dual-specificity RNA methyltransferase RlmN (388 aa).

Catalysis depends on Glu-109, which acts as the Proton acceptor. The region spanning 115–354 (EDDRATLCVS…TIVRKTRGDD (240 aa)) is the Radical SAM core domain. An intrachain disulfide couples Cys-122 to Cys-359. Cys-129, Cys-133, and Cys-136 together coordinate [4Fe-4S] cluster. S-adenosyl-L-methionine-binding positions include 183–184 (GE), Ser-215, 237–239 (SLH), and Asn-316. The active-site S-methylcysteine intermediate is the Cys-359.

It belongs to the radical SAM superfamily. RlmN family. The cofactor is [4Fe-4S] cluster.

It is found in the cytoplasm. It carries out the reaction adenosine(2503) in 23S rRNA + 2 reduced [2Fe-2S]-[ferredoxin] + 2 S-adenosyl-L-methionine = 2-methyladenosine(2503) in 23S rRNA + 5'-deoxyadenosine + L-methionine + 2 oxidized [2Fe-2S]-[ferredoxin] + S-adenosyl-L-homocysteine. The catalysed reaction is adenosine(37) in tRNA + 2 reduced [2Fe-2S]-[ferredoxin] + 2 S-adenosyl-L-methionine = 2-methyladenosine(37) in tRNA + 5'-deoxyadenosine + L-methionine + 2 oxidized [2Fe-2S]-[ferredoxin] + S-adenosyl-L-homocysteine. Its function is as follows. Specifically methylates position 2 of adenine 2503 in 23S rRNA and position 2 of adenine 37 in tRNAs. m2A2503 modification seems to play a crucial role in the proofreading step occurring at the peptidyl transferase center and thus would serve to optimize ribosomal fidelity. This is Dual-specificity RNA methyltransferase RlmN from Citrobacter koseri (strain ATCC BAA-895 / CDC 4225-83 / SGSC4696).